Here is a 317-residue protein sequence, read N- to C-terminus: tRNA pseudouridine synthase B (317 aa).

Residue aspartate 47 is the Nucleophile of the active site.

This sequence belongs to the pseudouridine synthase TruB family. Type 1 subfamily.

The enzyme catalyses uridine(55) in tRNA = pseudouridine(55) in tRNA. Its function is as follows. Responsible for synthesis of pseudouridine from uracil-55 in the psi GC loop of transfer RNAs. In Shewanella denitrificans (strain OS217 / ATCC BAA-1090 / DSM 15013), this protein is tRNA pseudouridine synthase B.